The following is a 789-amino-acid chain: Probable DNA helicase MCM8 (789 aa).

The C4-type zinc-finger motif lies at 174-201 (CMKCATKFPRVFCDGKFSPPVSCSIQGC). The region spanning 339–546 (VFRQILHSFC…LLDKRVSDHI (208 aa)) is the MCM domain. 391 to 398 (GDPGLGKS) is an ATP binding site. The short motif at 522-525 (SRFD) is the Arginine finger element.

It belongs to the MCM family.

The protein localises to the nucleus. The enzyme catalyses ATP + H2O = ADP + phosphate + H(+). In terms of biological role, probable DNA helicase that may play a role in DNA repair durin meiosis. This chain is Probable DNA helicase MCM8 (MCM8), found in Oryza sativa subsp. indica (Rice).